Reading from the N-terminus, the 180-residue chain is Regulator of G-protein signaling 8 (180 aa).

Phosphoserine is present on S26. An RGS domain is found at 56 to 171 (SFDVLLSHKY…FLRSKMYLDL (116 aa)).

Interacts with GNAO1. Interacts with GNAI3.

It localises to the cell membrane. The protein localises to the membrane. It is found in the perikaryon. The protein resides in the cell projection. Its subcellular location is the dendrite. It localises to the nucleus. Functionally, regulates G protein-coupled receptor signaling cascades, including signaling via muscarinic acetylcholine receptor CHRM2 and dopamine receptor DRD2. Inhibits signal transduction by increasing the GTPase activity of G protein alpha subunits, thereby driving them into their inactive GDP-bound form. Modulates the activity of potassium channels that are activated in response to DRD2 and CHRM2 signaling. The protein is Regulator of G-protein signaling 8 (RGS8) of Homo sapiens (Human).